We begin with the raw amino-acid sequence, 418 residues long: UDP-N-acetylglucosamine 1-carboxyvinyltransferase (418 aa).

Position 22-23 (22-23 (KN)) interacts with phosphoenolpyruvate. Arginine 92 provides a ligand contact to UDP-N-acetyl-alpha-D-glucosamine. Cysteine 116 serves as the catalytic Proton donor. 2-(S-cysteinyl)pyruvic acid O-phosphothioketal is present on cysteine 116. UDP-N-acetyl-alpha-D-glucosamine contacts are provided by residues 121-125 (RPIDL), aspartate 305, and leucine 327.

It belongs to the EPSP synthase family. MurA subfamily.

The protein resides in the cytoplasm. The catalysed reaction is phosphoenolpyruvate + UDP-N-acetyl-alpha-D-glucosamine = UDP-N-acetyl-3-O-(1-carboxyvinyl)-alpha-D-glucosamine + phosphate. It functions in the pathway cell wall biogenesis; peptidoglycan biosynthesis. Cell wall formation. Adds enolpyruvyl to UDP-N-acetylglucosamine. The protein is UDP-N-acetylglucosamine 1-carboxyvinyltransferase of Campylobacter jejuni subsp. jejuni serotype O:6 (strain 81116 / NCTC 11828).